The chain runs to 276 residues: Diaminopimelate epimerase (276 aa).

N13, Q46, and N66 together coordinate substrate. C75 functions as the Proton donor in the catalytic mechanism. Substrate-binding positions include 76 to 77 (GN), N159, N192, and 210 to 211 (ER). The active-site Proton acceptor is C219. Substrate is bound at residue 220-221 (GT).

The protein belongs to the diaminopimelate epimerase family. As to quaternary structure, homodimer.

The protein resides in the cytoplasm. It catalyses the reaction (2S,6S)-2,6-diaminopimelate = meso-2,6-diaminopimelate. It functions in the pathway amino-acid biosynthesis; L-lysine biosynthesis via DAP pathway; DL-2,6-diaminopimelate from LL-2,6-diaminopimelate: step 1/1. Its function is as follows. Catalyzes the stereoinversion of LL-2,6-diaminopimelate (L,L-DAP) to meso-diaminopimelate (meso-DAP), a precursor of L-lysine and an essential component of the bacterial peptidoglycan. This is Diaminopimelate epimerase from Chromobacterium violaceum (strain ATCC 12472 / DSM 30191 / JCM 1249 / CCUG 213 / NBRC 12614 / NCIMB 9131 / NCTC 9757 / MK).